The primary structure comprises 131 residues: Small ribosomal subunit protein uS9c (131 aa).

It belongs to the universal ribosomal protein uS9 family.

The protein resides in the plastid. Its subcellular location is the chloroplast. This chain is Small ribosomal subunit protein uS9c (rps9), found in Emiliania huxleyi (Coccolithophore).